Consider the following 476-residue polypeptide: MATAANQVGRITQVIGAVVDVQFEGHLPAILNAIETKNGENRLVLEVAQHLGESTVRTIAMDTTEGLVRGQDVTDTGAPIRVPVGAGTLGRIMNVIGEPVDEQGPVKADDLRPIHAEAPSYTDQSTEAEILVTGIKVVDLLAPYAKGGKIGLFGGAGVGKTVLIQELINNVAKAHGGYSVFAGVGERTREGNDLYHEFIESGVNKKGGGEGSKCALVYGQMNEPPGARARVALSGLTVAEHFRDQGQDVLFFVDNIFRFTQAGSEVSALLGRIPSAVGYQPTLATDMGALQERITTTNKGSITSVQAIYVPADDLTDPAPATSFAHLDATTVLNRAISEKGIYPAVDPLDSTSRMLSPLIVGEEHYQTARLVQQVLQRYKSLQDIIAILGMDELSEEDKLTVARARKVERFLSQPFHVAEVFTGSPGKFVDLADTIKGFRDLCQGKYDHLPEAAFYMVGTIEEAVEKGKKLAAEAA.

154-161 lines the ATP pocket; it reads GGAGVGKT.

The protein belongs to the ATPase alpha/beta chains family. F-type ATPases have 2 components, CF(1) - the catalytic core - and CF(0) - the membrane proton channel. CF(1) has five subunits: alpha(3), beta(3), gamma(1), delta(1), epsilon(1). CF(0) has three main subunits: a(1), b(2) and c(9-12). The alpha and beta chains form an alternating ring which encloses part of the gamma chain. CF(1) is attached to CF(0) by a central stalk formed by the gamma and epsilon chains, while a peripheral stalk is formed by the delta and b chains.

The protein resides in the cell inner membrane. It catalyses the reaction ATP + H2O + 4 H(+)(in) = ADP + phosphate + 5 H(+)(out). Produces ATP from ADP in the presence of a proton gradient across the membrane. The catalytic sites are hosted primarily by the beta subunits. The chain is ATP synthase subunit beta from Nitrobacter winogradskyi (strain ATCC 25391 / DSM 10237 / CIP 104748 / NCIMB 11846 / Nb-255).